Here is a 1372-residue protein sequence, read N- to C-terminus: DNA-directed RNA polymerase subunit beta' (1372 aa).

Residues Cys-69, Cys-71, Cys-84, and Cys-87 each coordinate Zn(2+). Asp-460, Asp-462, and Asp-464 together coordinate Mg(2+). The Zn(2+) site is built by Cys-808, Cys-882, Cys-889, and Cys-892.

The protein belongs to the RNA polymerase beta' chain family. The RNAP catalytic core consists of 2 alpha, 1 beta, 1 beta' and 1 omega subunit. When a sigma factor is associated with the core the holoenzyme is formed, which can initiate transcription. The cofactor is Mg(2+). Requires Zn(2+) as cofactor.

The catalysed reaction is RNA(n) + a ribonucleoside 5'-triphosphate = RNA(n+1) + diphosphate. Its function is as follows. DNA-dependent RNA polymerase catalyzes the transcription of DNA into RNA using the four ribonucleoside triphosphates as substrates. The protein is DNA-directed RNA polymerase subunit beta' of Rickettsia bellii (strain OSU 85-389).